The sequence spans 86 residues: Acyl carrier protein (86 aa).

One can recognise a Carrier domain in the interval 5 to 80 (EEILKKVQSI…EAVEFIIDKI (76 aa)). Serine 40 is subject to O-(pantetheine 4'-phosphoryl)serine.

Belongs to the acyl carrier protein (ACP) family. In terms of processing, 4'-phosphopantetheine is transferred from CoA to a specific serine of apo-ACP by AcpS. This modification is essential for activity because fatty acids are bound in thioester linkage to the sulfhydryl of the prosthetic group.

It localises to the plastid. It is found in the chloroplast. It functions in the pathway lipid metabolism; fatty acid biosynthesis. Its function is as follows. Carrier of the growing fatty acid chain in fatty acid biosynthesis. This is Acyl carrier protein from Cyanidium caldarium (Red alga).